Reading from the N-terminus, the 414-residue chain is 5-aminolevulinate synthase (414 aa).

Arg22, Ser133, and Lys152 together coordinate substrate. Positions 185, 213, and 241 each coordinate pyridoxal 5'-phosphate. Lys244 is an active-site residue. N6-(pyridoxal phosphate)lysine is present on Lys244. Pyridoxal 5'-phosphate is bound by residues Thr273 and Thr274. Thr359 lines the substrate pocket.

It belongs to the class-II pyridoxal-phosphate-dependent aminotransferase family. As to quaternary structure, homodimer. Requires pyridoxal 5'-phosphate as cofactor.

It carries out the reaction succinyl-CoA + glycine + H(+) = 5-aminolevulinate + CO2 + CoA. Its pathway is porphyrin-containing compound metabolism; protoporphyrin-IX biosynthesis; 5-aminolevulinate from glycine: step 1/1. The sequence is that of 5-aminolevulinate synthase (hemA) from Rickettsia typhi (strain ATCC VR-144 / Wilmington).